The primary structure comprises 79 residues: Ferredoxin oxidoreductase 1 subunit ForD (79 aa).

4Fe-4S ferredoxin-type domains follow at residues Y3–E35 and H37–I65. Residues C12, C17, C20, C24, C46, C49, C52, and C56 each coordinate [4Fe-4S] cluster.

In terms of assembly, heterotetramer of one alpha, one beta, one delta and one gamma chain. The cofactor is [4Fe-4S] cluster.

The sequence is that of Ferredoxin oxidoreductase 1 subunit ForD (forD1) from Aquifex aeolicus (strain VF5).